The primary structure comprises 181 residues: ADP-ribosylation factor 3 (181 aa).

Residue Gly-2 is the site of N-myristoyl glycine attachment. GTP is bound by residues 24 to 31, 67 to 71, and 126 to 129; these read GLDAAGKT, DVGGQ, and NKQD.

This sequence belongs to the small GTPase superfamily. Arf family. Interacts with PRKCABP. Interacts with PI4KB and NCS1/FREQ at the Golgi complex.

It is found in the golgi apparatus. It localises to the cytoplasm. The protein resides in the perinuclear region. Functionally, GTP-binding protein that functions as an allosteric activator of the cholera toxin catalytic subunit, an ADP-ribosyltransferase. Involved in protein trafficking; may modulate vesicle budding and uncoating within the Golgi apparatus. The protein is ADP-ribosylation factor 3 (ARF3) of Bos taurus (Bovine).